Reading from the N-terminus, the 238-residue chain is Ribonuclease PH (238 aa).

Phosphate is bound by residues Arg-87 and 125-127; that span reads GTR.

It belongs to the RNase PH family. Homohexameric ring arranged as a trimer of dimers.

It catalyses the reaction tRNA(n+1) + phosphate = tRNA(n) + a ribonucleoside 5'-diphosphate. Functionally, phosphorolytic 3'-5' exoribonuclease that plays an important role in tRNA 3'-end maturation. Removes nucleotide residues following the 3'-CCA terminus of tRNAs; can also add nucleotides to the ends of RNA molecules by using nucleoside diphosphates as substrates, but this may not be physiologically important. Probably plays a role in initiation of 16S rRNA degradation (leading to ribosome degradation) during starvation. In Synechococcus elongatus (strain ATCC 33912 / PCC 7942 / FACHB-805) (Anacystis nidulans R2), this protein is Ribonuclease PH.